Here is a 66-residue protein sequence, read N- to C-terminus: COP-associated protein (66 aa).

Residues 1–66 (MKATFQVPSI…ALLDAGQEVV (66 aa)) form the HMA domain. Cu cation contacts are provided by Cys-12 and Cys-15. Cys-12 and Cys-15 are joined by a disulfide.

In terms of biological role, part of a cation-transporting system which is associated with copper export out of the H.pylori cells. In Helicobacter pylori (strain ATCC 700392 / 26695) (Campylobacter pylori), this protein is COP-associated protein (copP).